The following is a 665-amino-acid chain: Ion-translocating oxidoreductase complex subunit C (665 aa).

4Fe-4S ferredoxin-type domains lie at 368-398 and 408-437; these read EYAEPEAEQACIRCSSCSDACPVNLMPQQLY and KSEEYALKDCIECGICAYVCPSHIPLIQYF. The [4Fe-4S] cluster site is built by cysteine 378, cysteine 381, cysteine 384, cysteine 388, cysteine 417, cysteine 420, cysteine 423, and cysteine 427. 2 stretches are compositionally biased toward basic and acidic residues: residues 465–477 and 485–513; these read QARMEREEQERKA and ARREELAQTKGEDPVKAALERLKAKKANE. Disordered regions lie at residues 465-568, 580-623, and 637-665; these read QARM…DAKK, AKKL…LDPK, and KKLAQANSTSEAISNSQTAENEVEKQIVR. Composition is skewed to polar residues over residues 554 to 564 and 585 to 600; these read VENQEQQTQPT and QTNSTSEAISNSQTAE. The span at 602 to 615 shows a compositional bias: basic and acidic residues; the sequence is EVEKTKSAVEKTEE. Over residues 643-656 the composition is skewed to polar residues; sequence NSTSEAISNSQTAE.

It belongs to the 4Fe4S bacterial-type ferredoxin family. RnfC subfamily. In terms of assembly, the complex is composed of six subunits: RnfA, RnfB, RnfC, RnfD, RnfE and RnfG. It depends on [4Fe-4S] cluster as a cofactor.

Its subcellular location is the cell inner membrane. Functionally, part of a membrane-bound complex that couples electron transfer with translocation of ions across the membrane. The sequence is that of Ion-translocating oxidoreductase complex subunit C from Haemophilus influenzae (strain 86-028NP).